The sequence spans 199 residues: Probable NADH dehydrogenase [ubiquinone] iron-sulfur protein 7, mitochondrial (199 aa).

[4Fe-4S] cluster is bound by residues Cys74, Cys75, Cys139, and Cys169.

The protein belongs to the complex I 20 kDa subunit family. In terms of assembly, complex I is composed of 45 different subunits This is a component of the iron-sulfur (IP) fragment of the enzyme. [4Fe-4S] cluster is required as a cofactor.

It is found in the mitochondrion. The catalysed reaction is a ubiquinone + NADH + 5 H(+)(in) = a ubiquinol + NAD(+) + 4 H(+)(out). Its function is as follows. Core subunit of the mitochondrial membrane respiratory chain NADH dehydrogenase (Complex I) that is believed to belong to the minimal assembly required for catalysis. Complex I functions in the transfer of electrons from NADH to the respiratory chain. The immediate electron acceptor for the enzyme is believed to be ubiquinone. The polypeptide is Probable NADH dehydrogenase [ubiquinone] iron-sulfur protein 7, mitochondrial (nduf-7) (Caenorhabditis elegans).